The primary structure comprises 257 residues: Acetylglutamate kinase (257 aa).

Residues 43–44 (GG), Arg-65, and Asn-157 contribute to the substrate site.

The protein belongs to the acetylglutamate kinase family. ArgB subfamily.

The protein resides in the cytoplasm. It carries out the reaction N-acetyl-L-glutamate + ATP = N-acetyl-L-glutamyl 5-phosphate + ADP. It participates in amino-acid biosynthesis; L-arginine biosynthesis; N(2)-acetyl-L-ornithine from L-glutamate: step 2/4. In terms of biological role, catalyzes the ATP-dependent phosphorylation of N-acetyl-L-glutamate. This chain is Acetylglutamate kinase, found in Pasteurella multocida (strain Pm70).